Reading from the N-terminus, the 179-residue chain is Ribosome maturation factor RimM (179 aa).

Residues 97-170 enclose the PRC barrel domain; that stretch reads DGELSWNFFV…LITVELPEGL (74 aa).

It belongs to the RimM family. Binds ribosomal protein uS19.

The protein localises to the cytoplasm. In terms of biological role, an accessory protein needed during the final step in the assembly of 30S ribosomal subunit, possibly for assembly of the head region. Essential for efficient processing of 16S rRNA. May be needed both before and after RbfA during the maturation of 16S rRNA. It has affinity for free ribosomal 30S subunits but not for 70S ribosomes. This Bacteroides thetaiotaomicron (strain ATCC 29148 / DSM 2079 / JCM 5827 / CCUG 10774 / NCTC 10582 / VPI-5482 / E50) protein is Ribosome maturation factor RimM.